The chain runs to 92 residues: Small ribosomal subunit protein uS19c (92 aa).

It belongs to the universal ribosomal protein uS19 family.

The protein resides in the plastid. It is found in the chloroplast. Protein S19 forms a complex with S13 that binds strongly to the 16S ribosomal RNA. The sequence is that of Small ribosomal subunit protein uS19c (rps19) from Picea abies (Norway spruce).